A 337-amino-acid polypeptide reads, in one-letter code: DNA-directed RNA polymerase subunit alpha (337 aa).

The tract at residues 1–233 (MVREEVVGST…DLFIPFLHAE (233 aa)) is alpha N-terminal domain (alpha-NTD). Residues 265 to 337 (KEIALKCIFI…FAIDLPKNKF (73 aa)) are alpha C-terminal domain (alpha-CTD).

Belongs to the RNA polymerase alpha chain family. In plastids the minimal PEP RNA polymerase catalytic core is composed of four subunits: alpha, beta, beta', and beta''. When a (nuclear-encoded) sigma factor is associated with the core the holoenzyme is formed, which can initiate transcription.

The protein resides in the plastid. It localises to the chloroplast. It carries out the reaction RNA(n) + a ribonucleoside 5'-triphosphate = RNA(n+1) + diphosphate. Functionally, DNA-dependent RNA polymerase catalyzes the transcription of DNA into RNA using the four ribonucleoside triphosphates as substrates. The sequence is that of DNA-directed RNA polymerase subunit alpha from Acorus calamus (Sweet flag).